A 466-amino-acid polypeptide reads, in one-letter code: Cysteine--tRNA ligase (466 aa).

Cys28 lines the Zn(2+) pocket. The short motif at 30-40 (PTVYNFFHIGN) is the 'HIGH' region element. Zn(2+) is bound by residues Cys208, His233, and Glu237. The short motif at 265–269 (KMSKS) is the 'KMSKS' region element. An ATP-binding site is contributed by Lys268.

The protein belongs to the class-I aminoacyl-tRNA synthetase family. As to quaternary structure, monomer. It depends on Zn(2+) as a cofactor.

It localises to the cytoplasm. The catalysed reaction is tRNA(Cys) + L-cysteine + ATP = L-cysteinyl-tRNA(Cys) + AMP + diphosphate. This Clostridium perfringens (strain ATCC 13124 / DSM 756 / JCM 1290 / NCIMB 6125 / NCTC 8237 / Type A) protein is Cysteine--tRNA ligase.